The sequence spans 157 residues: RNA pyrophosphohydrolase (157 aa).

A Nudix hydrolase domain is found at 6-149; it reads SYRPNVAAVI…KRKVYRRVID (144 aa). A Nudix box motif is present at residues 43 to 64; that stretch reads GGIDEGETPEDALYRELLEEIG.

Belongs to the Nudix hydrolase family. RppH subfamily. A divalent metal cation is required as a cofactor.

Functionally, accelerates the degradation of transcripts by removing pyrophosphate from the 5'-end of triphosphorylated RNA, leading to a more labile monophosphorylated state that can stimulate subsequent ribonuclease cleavage. The sequence is that of RNA pyrophosphohydrolase from Sulfurovum sp. (strain NBC37-1).